A 187-amino-acid chain; its full sequence is Small ribosomal subunit protein uS5 (187 aa).

The S5 DRBM domain occupies 20–83; that stretch reads FADRLVAINR…EQAKRQMIRV (64 aa). A disordered region spans residues 155–187; sequence KKEQSPRSVAQRRGKKVADILPKRDEAPAEAEA. The span at 170–181 shows a compositional bias: basic and acidic residues; it reads KVADILPKRDEA.

This sequence belongs to the universal ribosomal protein uS5 family. In terms of assembly, part of the 30S ribosomal subunit. Contacts proteins S4 and S8.

With S4 and S12 plays an important role in translational accuracy. In terms of biological role, located at the back of the 30S subunit body where it stabilizes the conformation of the head with respect to the body. The polypeptide is Small ribosomal subunit protein uS5 (Ruegeria sp. (strain TM1040) (Silicibacter sp.)).